The chain runs to 658 residues: UvrABC system protein B (658 aa).

The Helicase ATP-binding domain maps to 26–413 (EGINSGKKKQ…SPEVIEQIIR (388 aa)). ATP is bound at residue 39 to 46 (GATGTGKT). A Beta-hairpin motif is present at residues 92–115 (YYDYYQPEAYVPQTDTFIEKDAQI). The region spanning 430–596 (QIDDLLGEIQ…TIQKGVRDVI (167 aa)) is the Helicase C-terminal domain. Residues 622–657 (EKTIAKMEAEMKEAAKALDFERAAELRDLLLELKAE) form the UVR domain.

Belongs to the UvrB family. As to quaternary structure, forms a heterotetramer with UvrA during the search for lesions. Interacts with UvrC in an incision complex.

It is found in the cytoplasm. Functionally, the UvrABC repair system catalyzes the recognition and processing of DNA lesions. A damage recognition complex composed of 2 UvrA and 2 UvrB subunits scans DNA for abnormalities. Upon binding of the UvrA(2)B(2) complex to a putative damaged site, the DNA wraps around one UvrB monomer. DNA wrap is dependent on ATP binding by UvrB and probably causes local melting of the DNA helix, facilitating insertion of UvrB beta-hairpin between the DNA strands. Then UvrB probes one DNA strand for the presence of a lesion. If a lesion is found the UvrA subunits dissociate and the UvrB-DNA preincision complex is formed. This complex is subsequently bound by UvrC and the second UvrB is released. If no lesion is found, the DNA wraps around the other UvrB subunit that will check the other stand for damage. This Bacillus anthracis protein is UvrABC system protein B.